The sequence spans 349 residues: MQSFVHKIWYQGHPAAWLLLPLSLLFWLVSSLRRAAFRLGLKRSERLPVPVVVVGNITAGGSGKTPTVLYLIELLRREGWRPGVISRGYGASFDGELDVVAGMSPAQVGDEPAMIAMRTGIPMVVGRNRIKAAHKLLQCHDVNVILCDDGLQHYALERDVEILVIDGERRFGNGWLLPAGPLREGAWRKNSVNFVLCNGASAEADEYAMTLEPTGLVAVAAIHGKSQAKDNSHNAQDNATPRPGDTVNAMAGIGNPQRFFSTLMAQGFVLEKAHEFADHMAFSETDIATIDDGRPLLMTEKDAVKCREFAKQHWWYLAVDANLPPTFSTRLLDALNRAATAKQGNTHGL.

ATP is bound at residue 58–65 (TAGGSGKT).

It belongs to the LpxK family.

It carries out the reaction a lipid A disaccharide + ATP = a lipid IVA + ADP + H(+). It participates in glycolipid biosynthesis; lipid IV(A) biosynthesis; lipid IV(A) from (3R)-3-hydroxytetradecanoyl-[acyl-carrier-protein] and UDP-N-acetyl-alpha-D-glucosamine: step 6/6. Its function is as follows. Transfers the gamma-phosphate of ATP to the 4'-position of a tetraacyldisaccharide 1-phosphate intermediate (termed DS-1-P) to form tetraacyldisaccharide 1,4'-bis-phosphate (lipid IVA). This Shewanella amazonensis (strain ATCC BAA-1098 / SB2B) protein is Tetraacyldisaccharide 4'-kinase.